Here is a 133-residue protein sequence, read N- to C-terminus: UPF0225 protein BP2036 (133 aa).

The protein belongs to the UPF0225 family.

The protein is UPF0225 protein BP2036 of Bordetella pertussis (strain Tohama I / ATCC BAA-589 / NCTC 13251).